A 497-amino-acid polypeptide reads, in one-letter code: Glutamyl-tRNA(Gln) amidotransferase subunit A (497 aa).

Active-site charge relay system residues include lysine 91 and serine 166. The disordered stretch occupies residues 143 to 171 (SSTENSAYGPTHNPWDLERTAGGSGGGSS). Residue serine 190 is the Acyl-ester intermediate of the active site.

This sequence belongs to the amidase family. GatA subfamily. Heterotrimer of A, B and C subunits.

It catalyses the reaction L-glutamyl-tRNA(Gln) + L-glutamine + ATP + H2O = L-glutaminyl-tRNA(Gln) + L-glutamate + ADP + phosphate + H(+). Functionally, allows the formation of correctly charged Gln-tRNA(Gln) through the transamidation of misacylated Glu-tRNA(Gln) in organisms which lack glutaminyl-tRNA synthetase. The reaction takes place in the presence of glutamine and ATP through an activated gamma-phospho-Glu-tRNA(Gln). The polypeptide is Glutamyl-tRNA(Gln) amidotransferase subunit A (Corynebacterium glutamicum (strain R)).